The following is a 235-amino-acid chain: Repeat element protein (235 aa).

Positions 57 to 235 (IFQELLERLS…ARRKKCRFSQ (179 aa)) are repeat element.

This is Repeat element protein from Campoletis sonorensis (CsIV).